The sequence spans 447 residues: MAQAEVLLTKEPAPQSIDVCELPQKKYEVACNTGAYTSAGLATAGFRTAKYLMDEWFQNSYARYHQAFADRDYSERQRHESKQLAAETGELAYRTQLDSTRRVGERLEDMHCWKSELQREIDELSSETDQMMAQKLRLQRALDALSVPFSIATDNLQCRERRQHPDLVRDYVEVELLKETELIRNIQELLKRTMGQAVGQIRLNREHKENCEINWSDKVEVYNIDDTCARYTNESTQVQFYPHSSKFEESASTPETWGKFTQDVLLRAERERLASVNLRKLIDCILRDTAEDLRLQCDAVNLAFSNRCEELNDARQKLQYHLLKILSEITDQEHQIAALKQAIKDKEAPLRVAQTRLYQRSHRPNVELCRDNAQFRLMSEVEELNMSLKVLKEKLQDAEQALRNLEDSRMSLEKDIAVKTNSLFIDRQKCMTHRNRYPSVLQLAGYQ.

3 coiled-coil regions span residues 114–143 (KSELQREIDELSSETDQMMAQKLRLQRALD), 324–348 (KILSEITDQEHQIAALKQAIKDKEA), and 375–423 (FRLM…TNSL).

It belongs to the tektin family. In terms of assembly, microtubule inner protein component of sperm flagellar doublet microtubules. Ubiquitinated, leading to its degradation. Deubiquitinated by USP16, promoting its stability.

It is found in the cytoplasm. The protein resides in the cytoskeleton. The protein localises to the cilium axoneme. Its subcellular location is the flagellum axoneme. Functionally, microtubule inner protein (MIP) part of the dynein-decorated doublet microtubules (DMTs) in cilia and flagellar axoneme. Forms filamentous polymers in the walls of ciliary and flagellar microtubules. Contributes to normal sperm motility. This is Tektin-4 (Tekt4) from Rattus norvegicus (Rat).